We begin with the raw amino-acid sequence, 678 residues long: NADPH--cytochrome P450 reductase (678 aa).

Gly-2 is modified (N-acetylglycine). The Lumenal segment spans residues 2–21 (GDSHVDTGATSTEAVAEEVS). The helical transmembrane segment at 22-42 (LFSMTDMILLSVLVGFLTYFF) threads the bilayer. The Cytoplasmic segment spans residues 43-678 (LFRKKKEEIP…KGRYSLDVWS (636 aa)). Position 63 is a phosphoserine (Ser-63). The 145-residue stretch at 80–224 (IIVFYGSQTG…DFITWREQFW (145 aa)) folds into the Flavodoxin-like domain. FMN is bound by residues 86–91 (SQTGTA), 138–141 (ATYG), 173–182 (LGNKTYEHFN), and Asp-208. Residues 279 to 521 (KNPFLAAVTT…FVRKSQFRLP (243 aa)) form the FAD-binding FR-type domain. Arg-298 is a binding site for NADP(+). FAD is bound by residues Arg-424, 454–457 (RYYS), 472–474 (CAV), Tyr-478, and 488–491 (GVAT). Residues Thr-535, 596–597 (SR), 602–606 (KVYVQ), and Asp-639 each bind NADP(+). Trp-677 is a binding site for FAD.

This sequence belongs to the NADPH--cytochrome P450 reductase family. It in the N-terminal section; belongs to the flavodoxin family. The protein in the C-terminal section; belongs to the flavoprotein pyridine nucleotide cytochrome reductase family. It depends on FAD as a cofactor. Requires FMN as cofactor.

It is found in the endoplasmic reticulum membrane. The enzyme catalyses 2 oxidized [cytochrome P450] + NADPH = 2 reduced [cytochrome P450] + NADP(+) + H(+). Functionally, this enzyme is required for electron transfer from NADP to cytochrome P450 in microsomes. It can also provide electron transfer to heme oxygenase and cytochrome B5. The protein is NADPH--cytochrome P450 reductase of Cavia porcellus (Guinea pig).